The chain runs to 374 residues: Chaperone protein DnaJ (374 aa).

Residues 5 to 70 enclose the J domain; that stretch reads DYYEILEIER…GKRQLYDRYG (66 aa). The CR-type zinc finger occupies 136–213; sequence GCKKEIKIRY…CNGKGHENKE (78 aa). 8 residues coordinate Zn(2+): C149, C152, C165, C168, C187, C190, C201, and C204. 4 CXXCXGXG motif repeats span residues 149–156, 165–172, 187–194, and 201–208; these read CPDCKGTG, CPDCGGRG, CPKCGGSG, and CPKCNGKG.

The protein belongs to the DnaJ family. As to quaternary structure, homodimer. Zn(2+) serves as cofactor.

Its subcellular location is the cytoplasm. Its function is as follows. Participates actively in the response to hyperosmotic and heat shock by preventing the aggregation of stress-denatured proteins and by disaggregating proteins, also in an autonomous, DnaK-independent fashion. Unfolded proteins bind initially to DnaJ; upon interaction with the DnaJ-bound protein, DnaK hydrolyzes its bound ATP, resulting in the formation of a stable complex. GrpE releases ADP from DnaK; ATP binding to DnaK triggers the release of the substrate protein, thus completing the reaction cycle. Several rounds of ATP-dependent interactions between DnaJ, DnaK and GrpE are required for fully efficient folding. Also involved, together with DnaK and GrpE, in the DNA replication of plasmids through activation of initiation proteins. This chain is Chaperone protein DnaJ, found in Wolinella succinogenes (strain ATCC 29543 / DSM 1740 / CCUG 13145 / JCM 31913 / LMG 7466 / NCTC 11488 / FDC 602W) (Vibrio succinogenes).